Reading from the N-terminus, the 417-residue chain is Histidine biosynthesis bifunctional protein his7 (417 aa).

The segment at 225-299 is phosphoribosyl-AMP cyclohydrolase; sequence GLVYSSKESV…HLDTLHCFGQ (75 aa). Residues 303 to 387 are phosphoribosyl-ATP pyrophosphohydrolase; sequence LCQLEKTLID…ISRHLDLKHR (85 aa).

Its subcellular location is the cytoplasm. It catalyses the reaction 1-(5-phospho-beta-D-ribosyl)-5'-AMP + H2O = 1-(5-phospho-beta-D-ribosyl)-5-[(5-phospho-beta-D-ribosylamino)methylideneamino]imidazole-4-carboxamide. The catalysed reaction is 1-(5-phospho-beta-D-ribosyl)-ATP + H2O = 1-(5-phospho-beta-D-ribosyl)-5'-AMP + diphosphate + H(+). Its pathway is amino-acid biosynthesis; L-histidine biosynthesis; L-histidine from 5-phospho-alpha-D-ribose 1-diphosphate: step 2/9. The protein operates within amino-acid biosynthesis; L-histidine biosynthesis; L-histidine from 5-phospho-alpha-D-ribose 1-diphosphate: step 3/9. In Schizosaccharomyces pombe (strain 972 / ATCC 24843) (Fission yeast), this protein is Histidine biosynthesis bifunctional protein his7.